A 519-amino-acid chain; its full sequence is Cytochrome P450 monooxygenase AtmP (519 aa).

A helical membrane pass occupies residues Ser-21–Val-41. Cys-457 serves as a coordination point for heme.

It belongs to the cytochrome P450 family. Heme serves as cofactor.

It localises to the membrane. The protein operates within secondary metabolite biosynthesis. Its function is as follows. Cytochrome P450 monooxygenase; part of the ATM2 gene cluster that mediates the biosynthesis of aflatrem, a tremorgenic mycotoxin with acute neurotoxic effects. Synthesis of geranylgeranyl diphosphate (GGPP) by AtmG (a GGPP synthase) precedes condensation of GGPP with indole 3-glycerol phosphate, followed by epoxidation and cyclization by AtmM (a FAD-dependent monooxygenase) and AtmC (a prenyltransferase) to produce paspaline. AtmB is also essential for paspaline production, but its exact role has not been identified yet. AtmP, a cytochrome P450 monooxygenase, subsequently converts paspaline to 13-desoxypaxilline via PC-M6 by removal of the C-30 methyl group and oxidation at C-10. AtmQ, a cytochrome P450 monooxygenase, then catalyzes the oxidation of 13-desoxypaxilline, first at C-7 to produce paspalicine and then at C-13 to form paspalinine. Finally, AtmD prenylates paspalinine to form aflatrem. This is Cytochrome P450 monooxygenase AtmP from Aspergillus flavus.